The following is a 455-amino-acid chain: Golgi pH regulator (455 aa).

2 helical membrane-spanning segments follow: residues 5–25 (IDSSIMVTSQVLFFGFGWLFF) and 46–66 (VTFAFSCTMFELIIFEILGVL). The N-linked (GlcNAc...) asparagine glycan is linked to Asn-67. Helical transmembrane passes span 79-99 (LCVILLILVFMVPFYIGYFVV), 111-131 (LFACVLWLTFMYFFWKLGDPF), and 150-170 (VGVIGVTLMALLSGFGAVNCP). 2 N-linked (GlcNAc...) asparagine glycosylation sites follow: Asn-180 and Asn-243. 4 helical membrane passes run 290–310 (GYFFSIYCVWKIFMATINIVF), 343–363 (ISFILVGIIIVTSIRGLLITL), 378–398 (VIVLLLAQIMGMYFVSSVLLI), and 425–445 (WFDVIFLVSALSSILFLYLAH).

It belongs to the Golgi pH regulator (TC 1.A.38) family. In terms of assembly, homotrimer.

Its subcellular location is the golgi apparatus membrane. It carries out the reaction iodide(out) = iodide(in). The catalysed reaction is chloride(in) = chloride(out). It catalyses the reaction bromide(in) = bromide(out). The enzyme catalyses fluoride(in) = fluoride(out). In terms of biological role, voltage-gated channel that enables the transfer of anions such as iodide, chloride, bromide and fluoride which may function in counter-ion conductance and participates in Golgi acidification. This chain is Golgi pH regulator, found in Gallus gallus (Chicken).